The sequence spans 136 residues: MSQLVYFSSSSENTQRFIERLGLPAVRIPLNERERIQVDEPYILIVPSYGGGGTAGAVPRPVIRFLNDEHNRALLRGVIASGNRNFGEAYGRAGDVIAQKCGVPWLYSFELMGTQSDIENVRKGVTEFWQRQPQNA.

Belongs to the NrdI family.

Functionally, probably involved in ribonucleotide reductase function. The sequence is that of Protein NrdI from Escherichia coli O127:H6 (strain E2348/69 / EPEC).